A 360-amino-acid chain; its full sequence is Alpha-methylacyl-CoA racemase (360 aa).

Substrate is bound by residues Arg-38, 59–62 (ADLK), 83–85 (GYR), Arg-91, and 125–130 (GHDINY). The Proton acceptor role is filled by His-126. The active-site Proton donor is Asp-156.

It belongs to the CoA-transferase III family. Homodimer.

It carries out the reaction a (2S)-2-methylacyl-CoA = a (2R)-2-methylacyl-CoA. The enzyme catalyses (2S)-2-methyltetradecanoyl-CoA = (2R)-2-methyltetradecanoyl-CoA. It catalyses the reaction (2R)-pristanoyl-CoA = (2S)-pristanoyl-CoA. The catalysed reaction is (25S)-3-oxocholest-4-en-26-oyl-CoA = (25R)-3-oxocholest-4-en-26-oyl-CoA. It carries out the reaction (2S)-ibuprofenoyl-CoA = (2R)-ibuprofenoyl-CoA. With respect to regulation, inactivated by N,N-dialkylcarbamoyl-CoA substrate-product analogs. In terms of biological role, catalyzes the epimerization of (2R)- and (2S)-methylacyl-coenzyme A (CoA) thioesters. Accepts as substrates a wide range of alpha-methylacyl-CoAs, including (2R)-2-methylmyristoyl-CoA and (2S)-2-methylmyristoyl-CoA, (2R)-pristanoyl-CoA and (2S)-pristanoyl-CoA, and the cholesterol esters (25R)-3-oxo-cholest-4-en-26-oyl-CoA and (25S)-3-oxo-cholest-4-en-26-oyl-CoA. Can also catalyze the interconversion of the non-physiologic substrates (2R)-ibuprofenoyl-CoA and (2S)-ibuprofenoyl-CoA, which are potential competitive inhibitors of the enzyme. The protein is Alpha-methylacyl-CoA racemase of Mycobacterium tuberculosis (strain ATCC 25618 / H37Rv).